Consider the following 693-residue polypeptide: UvrABC system protein C (693 aa).

In terms of domain architecture, GIY-YIG spans 16–95; that stretch reads DAPGVYRFRD…IKEFDPRFNV (80 aa). One can recognise a UVR domain in the interval 208-243; the sequence is GVFLRRLESEMAAASAELDFERAARVRDDINALRRV. The tract at residues 656 to 693 is disordered; it reads APSPDDATTEPGAVGEPGTADGAAADPDGRDAVVVPEG. The span at 672–693 shows a compositional bias: low complexity; sequence PGTADGAAADPDGRDAVVVPEG.

It belongs to the UvrC family. Interacts with UvrB in an incision complex.

It localises to the cytoplasm. The UvrABC repair system catalyzes the recognition and processing of DNA lesions. UvrC both incises the 5' and 3' sides of the lesion. The N-terminal half is responsible for the 3' incision and the C-terminal half is responsible for the 5' incision. The protein is UvrABC system protein C of Beutenbergia cavernae (strain ATCC BAA-8 / DSM 12333 / CCUG 43141 / JCM 11478 / NBRC 16432 / NCIMB 13614 / HKI 0122).